Reading from the N-terminus, the 551-residue chain is DNA mismatch repair protein MutL (551 aa).

This sequence belongs to the DNA mismatch repair MutL/HexB family.

Its function is as follows. This protein is involved in the repair of mismatches in DNA. It is required for dam-dependent methyl-directed DNA mismatch repair. May act as a 'molecular matchmaker', a protein that promotes the formation of a stable complex between two or more DNA-binding proteins in an ATP-dependent manner without itself being part of a final effector complex. This chain is DNA mismatch repair protein MutL, found in Thermosipho melanesiensis (strain DSM 12029 / CIP 104789 / BI429).